The chain runs to 231 residues: MAKVSKRMKEISAKINAEKKYPVSEAFDLLREVSSVKFVESVDVSVALGVDPRKSDQVVRGASVLPNGTGKTVRVAVFAKGPAADAAKEAGAEVVGMEDLADEVKKGNMDFDVVIASPDSMRVVGQLGQILGPKGLMPNPKVGTVTMDVAKAVRDAKAGQVRYRVDKAGIIHTTIGKVNFTSDALKQNLEQLLTDLKKAKPAVSKGIYLKKVSVSSTMGPGINVDFSDLNI.

It belongs to the universal ribosomal protein uL1 family. Part of the 50S ribosomal subunit.

Binds directly to 23S rRNA. The L1 stalk is quite mobile in the ribosome, and is involved in E site tRNA release. Functionally, protein L1 is also a translational repressor protein, it controls the translation of the L11 operon by binding to its mRNA. This chain is Large ribosomal subunit protein uL1, found in Francisella tularensis subsp. tularensis (strain FSC 198).